Reading from the N-terminus, the 253-residue chain is 3-deoxy-manno-octulosonate cytidylyltransferase (253 aa).

Belongs to the KdsB family.

The protein localises to the cytoplasm. It catalyses the reaction 3-deoxy-alpha-D-manno-oct-2-ulosonate + CTP = CMP-3-deoxy-beta-D-manno-octulosonate + diphosphate. Its pathway is nucleotide-sugar biosynthesis; CMP-3-deoxy-D-manno-octulosonate biosynthesis; CMP-3-deoxy-D-manno-octulosonate from 3-deoxy-D-manno-octulosonate and CTP: step 1/1. The protein operates within bacterial outer membrane biogenesis; lipopolysaccharide biosynthesis. In terms of biological role, activates KDO (a required 8-carbon sugar) for incorporation into bacterial lipopolysaccharide in Gram-negative bacteria. The polypeptide is 3-deoxy-manno-octulosonate cytidylyltransferase (Neisseria gonorrhoeae (strain ATCC 700825 / FA 1090)).